Here is an 89-residue protein sequence, read N- to C-terminus: Signal recognition particle 19 kDa protein (89 aa).

It belongs to the SRP19 family. Part of the signal recognition particle protein translocation system, which is composed of SRP and FtsY. Archaeal SRP consists of a 7S RNA molecule of 300 nucleotides and two protein subunits: SRP54 and SRP19.

The protein localises to the cytoplasm. Its function is as follows. Involved in targeting and insertion of nascent membrane proteins into the cytoplasmic membrane. Binds directly to 7S RNA and mediates binding of the 54 kDa subunit of the SRP. The protein is Signal recognition particle 19 kDa protein of Methanococcus maripaludis (strain C5 / ATCC BAA-1333).